Consider the following 204-residue polypeptide: MKVKICGITDMETAKRACEYGADALGFVFAESKRKITPGLAKEIIQELPANVLKIGVFVNESVEVIQKITENCGLTHVQLHGGEDNHQIRRLNIPSIKSLGVTSESDMKNAQGYETDYILFDSPKEKFHGGNGKTFSWELLAHMPKELREKAILAGGLNTLNIEEAIRTVRPYMVDVSSGVETEGKKDVEKIKQFIIKAKECSK.

It belongs to the TrpF family.

The catalysed reaction is N-(5-phospho-beta-D-ribosyl)anthranilate = 1-(2-carboxyphenylamino)-1-deoxy-D-ribulose 5-phosphate. Its pathway is amino-acid biosynthesis; L-tryptophan biosynthesis; L-tryptophan from chorismate: step 3/5. In Bacillus cereus (strain ZK / E33L), this protein is N-(5'-phosphoribosyl)anthranilate isomerase.